The following is a 235-amino-acid chain: ATP phosphoribosyltransferase (235 aa).

Belongs to the ATP phosphoribosyltransferase family. Short subfamily. Heteromultimer composed of HisG and HisZ subunits.

It is found in the cytoplasm. The catalysed reaction is 1-(5-phospho-beta-D-ribosyl)-ATP + diphosphate = 5-phospho-alpha-D-ribose 1-diphosphate + ATP. Its pathway is amino-acid biosynthesis; L-histidine biosynthesis; L-histidine from 5-phospho-alpha-D-ribose 1-diphosphate: step 1/9. In terms of biological role, catalyzes the condensation of ATP and 5-phosphoribose 1-diphosphate to form N'-(5'-phosphoribosyl)-ATP (PR-ATP). Has a crucial role in the pathway because the rate of histidine biosynthesis seems to be controlled primarily by regulation of HisG enzymatic activity. This Synechococcus sp. (strain JA-2-3B'a(2-13)) (Cyanobacteria bacterium Yellowstone B-Prime) protein is ATP phosphoribosyltransferase.